We begin with the raw amino-acid sequence, 418 residues long: Putative heat shock protein HSP 90-alpha A4 (418 aa).

ATP-binding residues include Asp33, Lys52, Phe78, and Arg204. Disordered regions lie at residues 255–289 (EDLE…TSAK) and 383–418 (GLGT…RMEK). A compositionally biased stretch (basic and acidic residues) spans 265-274 (EKKKQEEGKQ).

This sequence belongs to the heat shock protein 90 family. In terms of assembly, homodimer.

It localises to the cytoplasm. Putative molecular chaperone that may promote the maturation, structural maintenance and proper regulation of specific target proteins. The protein is Putative heat shock protein HSP 90-alpha A4 (HSP90AA4P) of Homo sapiens (Human).